The primary structure comprises 236 residues: Purine nucleoside phosphorylase DeoD-type (236 aa).

A purine D-ribonucleoside is bound at residue His5. Residues Gly21, Arg25, Arg44, and Arg88–Ser91 each bind phosphate. A purine D-ribonucleoside is bound by residues Asp180–Glu182 and Ser204–Asp205. The active-site Proton donor is the Asp205.

This sequence belongs to the PNP/UDP phosphorylase family. As to quaternary structure, homohexamer; trimer of homodimers.

The enzyme catalyses a purine D-ribonucleoside + phosphate = a purine nucleobase + alpha-D-ribose 1-phosphate. The catalysed reaction is a purine 2'-deoxy-D-ribonucleoside + phosphate = a purine nucleobase + 2-deoxy-alpha-D-ribose 1-phosphate. In terms of biological role, catalyzes the reversible phosphorolytic breakdown of the N-glycosidic bond in the beta-(deoxy)ribonucleoside molecules, with the formation of the corresponding free purine bases and pentose-1-phosphate. The sequence is that of Purine nucleoside phosphorylase DeoD-type from Aliivibrio salmonicida (strain LFI1238) (Vibrio salmonicida (strain LFI1238)).